The primary structure comprises 311 residues: Phosphoribosylaminoimidazole-succinocarboxamide synthase (311 aa).

This sequence belongs to the SAICAR synthetase family.

It carries out the reaction 5-amino-1-(5-phospho-D-ribosyl)imidazole-4-carboxylate + L-aspartate + ATP = (2S)-2-[5-amino-1-(5-phospho-beta-D-ribosyl)imidazole-4-carboxamido]succinate + ADP + phosphate + 2 H(+). The protein operates within purine metabolism; IMP biosynthesis via de novo pathway; 5-amino-1-(5-phospho-D-ribosyl)imidazole-4-carboxamide from 5-amino-1-(5-phospho-D-ribosyl)imidazole-4-carboxylate: step 1/2. In Aromatoleum aromaticum (strain DSM 19018 / LMG 30748 / EbN1) (Azoarcus sp. (strain EbN1)), this protein is Phosphoribosylaminoimidazole-succinocarboxamide synthase.